The chain runs to 186 residues: GPI-anchored hemophore ARB_02741 (186 aa).

A signal peptide spans 1-18 (MKFSQAVIALAAATVVSA). Positions 19–108 (QLPDVPQCSL…SSKPSEPSTS (90 aa)) constitute a CFEM domain. 4 disulfide bridges follow: cysteine 26-cysteine 67, cysteine 30-cysteine 62, cysteine 40-cysteine 48, and cysteine 50-cysteine 83. Aspartate 45 lines the heme pocket. The disordered stretch occupies residues 89-159 (PVSIPPVEES…NTGVPTQSTP (71 aa)). The segment covering 96 to 131 (EESSSKPSEPSTSEAPTASPTESTPAPTTPAPTGTG) has biased composition (low complexity). The segment covering 132–144 (SPSGTGAPGGPSG) has biased composition (gly residues). Residues 148–159 (FTNTGVPTQSTP) are compositionally biased toward polar residues. Glycine 163 carries GPI-anchor amidated glycine lipidation. Residues 164 to 186 (AASGLSANIGGMGAAILAIAAYL) constitute a propeptide, removed in mature form.

It belongs to the RBT5 family. In terms of processing, the GPI-anchor is attached to the protein in the endoplasmic reticulum and serves to target the protein to the cell surface. There, the glucosamine-inositol phospholipid moiety is cleaved off and the GPI-modified mannoprotein is covalently attached via its lipidless GPI glycan remnant to the 1,6-beta-glucan of the outer cell wall layer.

It is found in the secreted. It localises to the cell wall. Its subcellular location is the cell membrane. Functionally, GPI-anchored cell wall protein involved in stabilizing the cell wall. The polypeptide is GPI-anchored hemophore ARB_02741 (Arthroderma benhamiae (strain ATCC MYA-4681 / CBS 112371) (Trichophyton mentagrophytes)).